The primary structure comprises 1435 residues: Protein SPP41 (1435 aa).

Disordered stretches follow at residues 16–74 (VGNL…NIEI), 88–265 (VANA…ENTL), 286–309 (AKQT…VEAQ), 322–424 (ELLS…DDEF), 442–482 (ETST…DSLD), 519–708 (SVSD…MKVP), and 934–972 (QQLD…AGHT). A compositionally biased stretch (acidic residues) spans 27–42 (GQEEGEVQGGEQEGDD). Basic and acidic residues-rich tracts occupy residues 53–63 (IEPKHPDDSQH), 98–127 (EQAK…KEQQ), and 139–154 (LKSD…ERRV). The UIM domain occupies 171–190 (QDDENLRMAILESLQELNTN). The span at 196–205 (EPEKHEHAAP) shows a compositional bias: basic and acidic residues. The segment covering 211-223 (SKKSSKKKKKDKS) has biased composition (basic residues). Positions 224-234 (KNRESSKDKSS) are enriched in basic and acidic residues. Basic residues predominate over residues 235–249 (KKSKSSSHSKKHAKD). A compositionally biased stretch (polar residues) spans 286–301 (AKQTVDIQDNSHTDNT). Residues 345-355 (KAVEPPRKPTA) are compositionally biased toward basic and acidic residues. Residues 367-383 (KPKKRPPQEKKKTKSKT) show a composition bias toward basic residues. Over residues 384-398 (SKAASTANKSPASES) the composition is skewed to low complexity. Polar residues-rich tracts occupy residues 442–451 (ETSTHTATQD) and 459–482 (DFTS…DSLD). Composition is skewed to basic and acidic residues over residues 524-548 (LPHD…EKKT), 610-628 (KNKE…AREE), and 637-652 (KQRL…KIVE). The span at 665-674 (KSGKPKKPYR) shows a compositional bias: basic residues. Over residues 676–691 (WTPEELLKRSQEAEKP) the composition is skewed to basic and acidic residues. A Nuclear localization signal motif is present at residues 683–699 (KRSQEAEKPRKVKKERK). Residues 692–706 (RKVKKERKKKEKKMK) are compositionally biased toward basic residues. Lys-981 participates in a covalent cross-link: Glycyl lysine isopeptide (Lys-Gly) (interchain with G-Cter in SUMO). The segment covering 1005 to 1014 (KLELTKRAES) has biased composition (basic and acidic residues). A disordered region spans residues 1005–1125 (KLELTKRAES…DSVNTTTGKP (121 aa)). A Phosphoserine modification is found at Ser-1014. Positions 1021–1032 (NVETAKETQSVQ) are enriched in polar residues. 2 stretches are compositionally biased toward basic and acidic residues: residues 1033-1082 (EIKE…EKIA) and 1091-1103 (LSDK…KSTL). Position 1067 is a phosphoserine (Ser-1067). The span at 1108 to 1123 (AQLTGNEPDSVNTTTG) shows a compositional bias: polar residues. A Glycyl lysine isopeptide (Lys-Gly) (interchain with G-Cter in SUMO) cross-link involves residue Lys-1154.

Interacts with PRP8 and RAP1.

The protein localises to the nucleus. In terms of biological role, negative regulator of PRP3 and PRP4 genes. The protein is Protein SPP41 (SPP41) of Saccharomyces cerevisiae (strain ATCC 204508 / S288c) (Baker's yeast).